We begin with the raw amino-acid sequence, 429 residues long: Zinc finger protein 385C (429 aa).

The Matrin-type 1 zinc-finger motif lies at 77–107 (ISCNICHLRFNSANQAEAHYKGHRHARKLKA). Disordered regions lie at residues 109–224 (EAAK…GRGE), 258–295 (GHQG…GPSP), and 311–340 (QLKQ…NKLQ). The span at 125 to 146 (TVVSSASPPASGSPGTPQSKGP) shows a compositional bias: low complexity. Over residues 147–162 (ASPPLGPSLQLPPTPD) the composition is skewed to pro residues. The segment covering 181-193 (CDAAASSSSSSCP) has biased composition (low complexity). Residues 225 to 259 (KGRLYCPTCKVTVNSASQLQAHNTGAKHRWMVEGH) form a Matrin-type 2 zinc finger. The segment covering 262–284 (APRRGRGRPVSRGGTGHKTKRVI) has biased composition (basic residues). The Matrin-type 3 zinc-finger motif lies at 297–327 (FHCALCQLHVNSETQLKQHMSSRRHKDRLAG).

It localises to the nucleus. This Mus musculus (Mouse) protein is Zinc finger protein 385C.